The following is a 1281-amino-acid chain: Enterobactin synthase component F (1281 aa).

The segment at 1-301 is elongation/condensation; that stretch reads MSQHLPLVAA…NVLPLGIHIA (301 aa). The interval 486–891 is adenylation; that stretch reads SYREMHEQVV…ALPDVKQAVT (406 aa). One can recognise a Carrier domain in the interval 975-1050; that stretch reads APKAGSETII…KLATIIDGEE (76 aa). Ser-1010 is subject to O-(pantetheine 4'-phosphoryl)serine. The thioesterase stretch occupies residues 1070-1281; it reads PTLFCFHPAS…GPIIRATLNR (212 aa). The active-site Proton acceptor; for thioesterase activity is His-1259.

Belongs to the ATP-dependent AMP-binding enzyme family. EntF subfamily. As to quaternary structure, proteins EntB, EntD, EntE and EntF are the component of the enterobactin synthase. Components probably do not form a stable complex. EntF acts as a catalytic monomer. Pantetheine 4'-phosphate is required as a cofactor. 4'-phosphopantetheine is transferred from CoA to a specific serine of apo-EntF by EntD. Holo-EntF so formed is then acylated with seryl-AMP.

The protein localises to the cytoplasm. It catalyses the reaction 3 2,3-dihydroxybenzoate + 3 L-serine + 6 ATP = enterobactin + 6 AMP + 6 diphosphate + 4 H(+). It carries out the reaction holo-[peptidyl-carrier protein] + L-serine + ATP = L-seryl-[peptidyl-carrier protein] + AMP + diphosphate. It functions in the pathway siderophore biosynthesis; enterobactin biosynthesis. In terms of biological role, involved in the biosynthesis of the siderophore enterobactin (enterochelin), which is a macrocyclic trimeric lactone of N-(2,3-dihydroxybenzoyl)-serine. EntF catalyzes the activation of L-serine via ATP-dependent PPi exchange reaction to form seryladenylate. Activated L-serine is loaded onto the peptidyl carrier domain via a thioester linkage to the phosphopanthetheine moiety, forming seryl-S-Ppant-EntF. EntF acts then as the sole catalyst for the formation of the three amide and three ester linkages found in enterobactin, using seryladenylate and 2,3-dihydroxybenzoate-S-Ppant-EntB (DHB-S-Ppant-EntB) as substrates, via the formation of a DHB-Ser-S-Ppant-EntF intermediate. This is Enterobactin synthase component F (entF) from Shigella flexneri.